A 210-amino-acid chain; its full sequence is ATP-dependent Clp protease proteolytic subunit (210 aa).

The Nucleophile role is filled by Ser-107. The active site involves His-132.

The protein belongs to the peptidase S14 family. Fourteen ClpP subunits assemble into 2 heptameric rings which stack back to back to give a disk-like structure with a central cavity, resembling the structure of eukaryotic proteasomes.

The protein resides in the cytoplasm. The catalysed reaction is Hydrolysis of proteins to small peptides in the presence of ATP and magnesium. alpha-casein is the usual test substrate. In the absence of ATP, only oligopeptides shorter than five residues are hydrolyzed (such as succinyl-Leu-Tyr-|-NHMec, and Leu-Tyr-Leu-|-Tyr-Trp, in which cleavage of the -Tyr-|-Leu- and -Tyr-|-Trp bonds also occurs).. Functionally, cleaves peptides in various proteins in a process that requires ATP hydrolysis. Has a chymotrypsin-like activity. Plays a major role in the degradation of misfolded proteins. This chain is ATP-dependent Clp protease proteolytic subunit, found in Zymomonas mobilis subsp. mobilis (strain ATCC 31821 / ZM4 / CP4).